Consider the following 467-residue polypeptide: Tyrosine phenol-lyase (467 aa).

Lys-268 bears the N6-(pyridoxal phosphate)lysine mark.

This sequence belongs to the beta-eliminating lyase family. In terms of assembly, homotetramer. It depends on pyridoxal 5'-phosphate as a cofactor.

It carries out the reaction L-tyrosine + H2O = phenol + pyruvate + NH4(+). The protein is Tyrosine phenol-lyase of Nostoc punctiforme (strain ATCC 29133 / PCC 73102).